A 263-amino-acid polypeptide reads, in one-letter code: Hydroxyethylthiazole kinase (263 aa).

Substrate is bound at residue methionine 41. Arginine 117 and serine 163 together coordinate ATP. Alanine 190 provides a ligand contact to substrate.

It belongs to the Thz kinase family. It depends on Mg(2+) as a cofactor.

It catalyses the reaction 5-(2-hydroxyethyl)-4-methylthiazole + ATP = 4-methyl-5-(2-phosphooxyethyl)-thiazole + ADP + H(+). It functions in the pathway cofactor biosynthesis; thiamine diphosphate biosynthesis; 4-methyl-5-(2-phosphoethyl)-thiazole from 5-(2-hydroxyethyl)-4-methylthiazole: step 1/1. Functionally, catalyzes the phosphorylation of the hydroxyl group of 4-methyl-5-beta-hydroxyethylthiazole (THZ). The polypeptide is Hydroxyethylthiazole kinase (Haemophilus influenzae (strain PittEE)).